A 370-amino-acid chain; its full sequence is MANYSHAADNILQNLSPLTAFLKLTSLGFIIGVSVVGNLLISILLAKDKTLHRAPYYFLLDLCCSDILRSAICFPFVFNSVKNGSTWTYGTLTCKVIAFLGVLSCFHTAFMLFCISVTRYLAIAHHRFYTKRLTFWTCLAVICMVWTLSVAMAFPPVLDVGTYSFIREEDQCTFQHRSFRANDSLGFMLLLALILLATQLVYLKLIFFVHDRRKMKPVQFVAAVSQNWTFHGPGASGQAAANWLAGFGRGSTPPTLLGIRQNANTTGRRRLLVLDEFKMEKRISRMFYIMTFLFLTLWGPYLVACYWRVFARGPVVPGGFLTAAVWMSFAQAGINPFVCIFSNRELRRCFSTTLLYCRKSRLPREPYCVI.

At 1–25 (MANYSHAADNILQNLSPLTAFLKLT) the chain is on the extracellular side. Residue N3 is glycosylated (N-linked (GlcNAc...) asparagine). The chain crosses the membrane as a helical span at residues 26-46 (SLGFIIGVSVVGNLLISILLA). The Cytoplasmic portion of the chain corresponds to 47–57 (KDKTLHRAPYY). Residues 58–78 (FLLDLCCSDILRSAICFPFVF) form a helical membrane-spanning segment. The Extracellular segment spans residues 79–96 (NSVKNGSTWTYGTLTCKV). N-linked (GlcNAc...) asparagine glycosylation occurs at N83. A disulfide bridge links C94 with C172. The helical transmembrane segment at 97–117 (IAFLGVLSCFHTAFMLFCISV) threads the bilayer. Topologically, residues 118–137 (TRYLAIAHHRFYTKRLTFWT) are cytoplasmic. A helical transmembrane segment spans residues 138–158 (CLAVICMVWTLSVAMAFPPVL). The Extracellular segment spans residues 159–188 (DVGTYSFIREEDQCTFQHRSFRANDSLGFM). N-linked (GlcNAc...) asparagine glycosylation occurs at N182. The chain crosses the membrane as a helical span at residues 189 to 209 (LLLALILLATQLVYLKLIFFV). At 210–286 (HDRRKMKPVQ…FKMEKRISRM (77 aa)) the chain is on the cytoplasmic side. A helical transmembrane segment spans residues 287 to 307 (FYIMTFLFLTLWGPYLVACYW). Over 308–313 (RVFARG) the chain is Extracellular. A helical membrane pass occupies residues 314-334 (PVVPGGFLTAAVWMSFAQAGI). Topologically, residues 335 to 370 (NPFVCIFSNRELRRCFSTTLLYCRKSRLPREPYCVI) are cytoplasmic.

This sequence belongs to the G-protein coupled receptor 1 family. As to quaternary structure, interacts with DLG4 and DLG3.

It localises to the cell membrane. It is found in the endoplasmic reticulum. Functionally, orphan receptor. This Pongo abelii (Sumatran orangutan) protein is Probable G-protein coupled receptor 85 (GPR85).